The following is a 699-amino-acid chain: 1,4-alpha-glucan-branching enzyme (699 aa).

Residues 59–60 and 88–90 contribute to the substrate site; these read NE and WAP. Tryptophan 104 is a (1,4-alpha-D-glucosyl)n binding site. 115–118 is a binding site for substrate; sequence DYGK. (1,4-alpha-D-glucosyl)n is bound at residue lysine 140. Tyrosine 170 is subject to Phosphotyrosine. 330-333 is a substrate binding site; it reads EVLR. The active-site Nucleophile is the aspartate 354. Glutamate 409 functions as the Proton donor in the catalytic mechanism.

The protein belongs to the glycosyl hydrolase 13 family. GlgB subfamily. In terms of assembly, monomer.

The catalysed reaction is Transfers a segment of a (1-&gt;4)-alpha-D-glucan chain to a primary hydroxy group in a similar glucan chain.. It participates in glycan biosynthesis; glycogen biosynthesis. Glycogen-branching enzyme participates in the glycogen biosynthetic process along with glycogenin and glycogen synthase. Generates alpha-1,6-glucosidic branches from alpha-1,4-linked glucose chains, to increase solubility of the glycogen polymer. This is 1,4-alpha-glucan-branching enzyme (GBE1) from Equus caballus (Horse).